The chain runs to 161 residues: NADH-quinone oxidoreductase subunit I (161 aa).

2 4Fe-4S ferredoxin-type domains span residues leucine 52 to lysine 82 and threonine 92 to asparagine 121. Residues cysteine 62, cysteine 65, cysteine 68, cysteine 72, cysteine 101, cysteine 104, cysteine 107, and cysteine 111 each contribute to the [4Fe-4S] cluster site.

It belongs to the complex I 23 kDa subunit family. NDH-1 is composed of 14 different subunits. Subunits NuoA, H, J, K, L, M, N constitute the membrane sector of the complex. [4Fe-4S] cluster is required as a cofactor.

It localises to the cell inner membrane. The enzyme catalyses a quinone + NADH + 5 H(+)(in) = a quinol + NAD(+) + 4 H(+)(out). Its function is as follows. NDH-1 shuttles electrons from NADH, via FMN and iron-sulfur (Fe-S) centers, to quinones in the respiratory chain. The immediate electron acceptor for the enzyme in this species is believed to be ubiquinone. Couples the redox reaction to proton translocation (for every two electrons transferred, four hydrogen ions are translocated across the cytoplasmic membrane), and thus conserves the redox energy in a proton gradient. The polypeptide is NADH-quinone oxidoreductase subunit I (Orientia tsutsugamushi (strain Boryong) (Rickettsia tsutsugamushi)).